The primary structure comprises 242 residues: Lactate utilization protein A 2 (242 aa).

Belongs to the LutA/YkgE family.

In terms of biological role, is involved in L-lactate degradation and allows cells to grow with lactate as the sole carbon source. The protein is Lactate utilization protein A 2 of Bacillus cereus (strain 03BB102).